The primary structure comprises 32 residues: Dermatoxin-J1 (32 aa).

Residue glutamine 32 is modified to Glutamine amide.

In terms of tissue distribution, expressed by the skin glands.

The protein resides in the secreted. Antimicrobial peptide. The chain is Dermatoxin-J1 from Phasmahyla jandaia (Jandaia leaf frog).